Here is a 122-residue protein sequence, read N- to C-terminus: MARIAGVNIPTAKRVPIALTYIHGIGNHVAEQICDAVGIDRARRVNQLSDAEVLAIREYIDANVTVEGDLRRETSMNIKRLMDLGCYRGLRHRRGLPVRGQRTHTNARTRKGPAKAIAGKKK.

The interval 99 to 122 is disordered; that stretch reads RGQRTHTNARTRKGPAKAIAGKKK.

This sequence belongs to the universal ribosomal protein uS13 family. As to quaternary structure, part of the 30S ribosomal subunit. Forms a loose heterodimer with protein S19. Forms two bridges to the 50S subunit in the 70S ribosome.

Its function is as follows. Located at the top of the head of the 30S subunit, it contacts several helices of the 16S rRNA. In the 70S ribosome it contacts the 23S rRNA (bridge B1a) and protein L5 of the 50S subunit (bridge B1b), connecting the 2 subunits; these bridges are implicated in subunit movement. Contacts the tRNAs in the A and P-sites. In Cereibacter sphaeroides (strain ATCC 17025 / ATH 2.4.3) (Rhodobacter sphaeroides), this protein is Small ribosomal subunit protein uS13.